Consider the following 492-residue polypeptide: Ketol-acid reductoisomerase (NADP(+)) (492 aa).

Residues 15 to 208 enclose the KARI N-terminal Rossmann domain; it reads AQLGKCRFMA…GGHRAGVLES (194 aa). NADP(+)-binding positions include 45–48, R68, R76, S78, and 108–110; these read CGAQ and DKQ. The active site involves H132. G158 contributes to the NADP(+) binding site. KARI C-terminal knotted domains are found at residues 209 to 344 and 345 to 485; these read SFVA…NAPQ and FEGK…MTDM. 4 residues coordinate Mg(2+): D217, E221, E389, and E393. Position 414 (S414) interacts with substrate.

It belongs to the ketol-acid reductoisomerase family. Requires Mg(2+) as cofactor.

It carries out the reaction (2R)-2,3-dihydroxy-3-methylbutanoate + NADP(+) = (2S)-2-acetolactate + NADPH + H(+). The enzyme catalyses (2R,3R)-2,3-dihydroxy-3-methylpentanoate + NADP(+) = (S)-2-ethyl-2-hydroxy-3-oxobutanoate + NADPH + H(+). It participates in amino-acid biosynthesis; L-isoleucine biosynthesis; L-isoleucine from 2-oxobutanoate: step 2/4. It functions in the pathway amino-acid biosynthesis; L-valine biosynthesis; L-valine from pyruvate: step 2/4. Its function is as follows. Involved in the biosynthesis of branched-chain amino acids (BCAA). Catalyzes an alkyl-migration followed by a ketol-acid reduction of (S)-2-acetolactate (S2AL) to yield (R)-2,3-dihydroxy-isovalerate. In the isomerase reaction, S2AL is rearranged via a Mg-dependent methyl migration to produce 3-hydroxy-3-methyl-2-ketobutyrate (HMKB). In the reductase reaction, this 2-ketoacid undergoes a metal-dependent reduction by NADPH to yield (R)-2,3-dihydroxy-isovalerate. The chain is Ketol-acid reductoisomerase (NADP(+)) from Yersinia pseudotuberculosis serotype O:3 (strain YPIII).